The chain runs to 211 residues: ATP phosphoribosyltransferase (211 aa).

The protein belongs to the ATP phosphoribosyltransferase family. Short subfamily. Heteromultimer composed of HisG and HisZ subunits.

It localises to the cytoplasm. The enzyme catalyses 1-(5-phospho-beta-D-ribosyl)-ATP + diphosphate = 5-phospho-alpha-D-ribose 1-diphosphate + ATP. Its pathway is amino-acid biosynthesis; L-histidine biosynthesis; L-histidine from 5-phospho-alpha-D-ribose 1-diphosphate: step 1/9. Functionally, catalyzes the condensation of ATP and 5-phosphoribose 1-diphosphate to form N'-(5'-phosphoribosyl)-ATP (PR-ATP). Has a crucial role in the pathway because the rate of histidine biosynthesis seems to be controlled primarily by regulation of HisG enzymatic activity. In Pseudomonas putida (strain GB-1), this protein is ATP phosphoribosyltransferase.